The primary structure comprises 554 residues: Phenylalanine--tRNA ligase beta subunit (554 aa).

A B5 domain is found at 276–351 (LTLKSRIISI…INYGYEKFEG (76 aa)). The Mg(2+) site is built by Asp-329, Asp-335, Glu-338, and Glu-339.

Belongs to the phenylalanyl-tRNA synthetase beta subunit family. Type 2 subfamily. As to quaternary structure, tetramer of two alpha and two beta subunits. Requires Mg(2+) as cofactor.

It localises to the cytoplasm. The enzyme catalyses tRNA(Phe) + L-phenylalanine + ATP = L-phenylalanyl-tRNA(Phe) + AMP + diphosphate + H(+). In Methanococcus maripaludis (strain C7 / ATCC BAA-1331), this protein is Phenylalanine--tRNA ligase beta subunit.